An 819-amino-acid chain; its full sequence is Meiotically up-regulated gene 45 protein (819 aa).

Residues 797–817 (AMCLLTLLIGIYLILQVVFIY) traverse the membrane as a helical segment.

It localises to the membrane. In terms of biological role, has a role in meiosis. This Schizosaccharomyces pombe (strain 972 / ATCC 24843) (Fission yeast) protein is Meiotically up-regulated gene 45 protein (mug45).